Here is a 259-residue protein sequence, read N- to C-terminus: Tryptophan synthase alpha chain (259 aa).

Residues E52 and D63 each act as proton acceptor in the active site.

Belongs to the TrpA family. In terms of assembly, tetramer of two alpha and two beta chains.

The catalysed reaction is (1S,2R)-1-C-(indol-3-yl)glycerol 3-phosphate + L-serine = D-glyceraldehyde 3-phosphate + L-tryptophan + H2O. It functions in the pathway amino-acid biosynthesis; L-tryptophan biosynthesis; L-tryptophan from chorismate: step 5/5. Its function is as follows. The alpha subunit is responsible for the aldol cleavage of indoleglycerol phosphate to indole and glyceraldehyde 3-phosphate. This Streptococcus gordonii (strain Challis / ATCC 35105 / BCRC 15272 / CH1 / DL1 / V288) protein is Tryptophan synthase alpha chain.